A 360-amino-acid chain; its full sequence is Peptide chain release factor 1 (360 aa).

An N5-methylglutamine modification is found at Gln-235. Over residues 285–295 (RQAAEQTDMRR) the composition is skewed to basic and acidic residues. A disordered region spans residues 285 to 309 (RQAAEQTDMRRNLLGSGDRSDKIRT).

This sequence belongs to the prokaryotic/mitochondrial release factor family. Post-translationally, methylated by PrmC. Methylation increases the termination efficiency of RF1.

It localises to the cytoplasm. Its function is as follows. Peptide chain release factor 1 directs the termination of translation in response to the peptide chain termination codons UAG and UAA. The sequence is that of Peptide chain release factor 1 from Haemophilus influenzae (strain 86-028NP).